Reading from the N-terminus, the 58-residue chain is Large ribosomal subunit protein bL32c (58 aa).

It belongs to the bacterial ribosomal protein bL32 family.

The protein resides in the plastid. It is found in the chloroplast. This is Large ribosomal subunit protein bL32c from Chaetosphaeridium globosum (Charophycean green alga).